The primary structure comprises 1787 residues: ATP-dependent RNA helicase DEAH11, chloroplastic (1787 aa).

The transit peptide at 1 to 33 (MRNSFPPSDGGRSTTDRRQQSFPSSSTNRYNSR) directs the protein to the chloroplast. Residues 1-75 (MRNSFPPSDG…DRAPSSGFSP (75 aa)) form a disordered region. Residues 20–60 (QSFPSSSTNRYNSRSAQSSPPLNHCTTWNQQHSQYHNTNFP) are compositionally biased toward polar residues. The region spanning 313 to 477 (LKKIHCEQIM…LFDCGILHVN (165 aa)) is the Helicase ATP-binding domain. 326–333 (GETGSGKS) lines the ATP pocket. Positions 424-427 (DEAH) match the DEAH box motif. Positions 507 to 673 (DVVKMAVEIH…VALLRMLALG (167 aa)) constitute a Helicase C-terminal domain. Residues 1557-1764 (IELECPICLS…EPCYAHLRTI (208 aa)) form a TRIAD supradomain region. Positions 1561, 1564, 1577, 1579, 1582, 1585, 1604, 1609, 1649, 1654, 1672, 1675, 1680, 1683, 1688, 1693, 1719, and 1722 each coordinate Zn(2+). The RING-type 1 zinc finger occupies 1561 to 1609 (CPICLSEVDDGYSLEGCSHLFCKACLLEQFEASMRNFDAFPILCSHIDC). The segment at 1628 to 1693 (DELISASLSA…HLEYHPLITC (66 aa)) adopts an IBR-type zinc-finger fold. The RING-type 2; atypical zinc finger occupies 1719-1747 (CPICKSTIEKTDGCNHLQCRCGKHICWTC). Cysteine 1732 is an active-site residue. Cysteine 1737 and cysteine 1739 together coordinate Zn(2+).

Belongs to the DEAD box helicase family. DEAH subfamily.

The protein localises to the plastid. It is found in the chloroplast. The catalysed reaction is ATP + H2O = ADP + phosphate + H(+). This is ATP-dependent RNA helicase DEAH11, chloroplastic from Arabidopsis thaliana (Mouse-ear cress).